Here is a 303-residue protein sequence, read N- to C-terminus: Ferrochelatase (303 aa).

2 residues coordinate Fe cation: histidine 185 and glutamate 262.

It belongs to the ferrochelatase family.

Its subcellular location is the cytoplasm. The catalysed reaction is heme b + 2 H(+) = protoporphyrin IX + Fe(2+). It functions in the pathway porphyrin-containing compound metabolism; protoheme biosynthesis; protoheme from protoporphyrin-IX: step 1/1. Its function is as follows. Catalyzes the ferrous insertion into protoporphyrin IX. In Campylobacter jejuni subsp. jejuni serotype O:2 (strain ATCC 700819 / NCTC 11168), this protein is Ferrochelatase.